Here is a 355-residue protein sequence, read N- to C-terminus: Probable dual-specificity RNA methyltransferase RlmN (355 aa).

The Proton acceptor role is filled by glutamate 89. The Radical SAM core domain maps to 95–322 (YENRKTVCLS…KRLGVPTSIR (228 aa)). Cysteine 102 and cysteine 333 are joined by a disulfide. The [4Fe-4S] cluster site is built by cysteine 109, cysteine 113, and cysteine 116. Residues 159–160 (GE), serine 191, 214–216 (SLH), and asparagine 290 contribute to the S-adenosyl-L-methionine site. Cysteine 333 acts as the S-methylcysteine intermediate in catalysis.

The protein belongs to the radical SAM superfamily. RlmN family. Requires [4Fe-4S] cluster as cofactor.

The protein resides in the cytoplasm. The enzyme catalyses adenosine(2503) in 23S rRNA + 2 reduced [2Fe-2S]-[ferredoxin] + 2 S-adenosyl-L-methionine = 2-methyladenosine(2503) in 23S rRNA + 5'-deoxyadenosine + L-methionine + 2 oxidized [2Fe-2S]-[ferredoxin] + S-adenosyl-L-homocysteine. The catalysed reaction is adenosine(37) in tRNA + 2 reduced [2Fe-2S]-[ferredoxin] + 2 S-adenosyl-L-methionine = 2-methyladenosine(37) in tRNA + 5'-deoxyadenosine + L-methionine + 2 oxidized [2Fe-2S]-[ferredoxin] + S-adenosyl-L-homocysteine. Its function is as follows. Specifically methylates position 2 of adenine 2503 in 23S rRNA and position 2 of adenine 37 in tRNAs. The protein is Probable dual-specificity RNA methyltransferase RlmN of Thermus thermophilus (strain ATCC BAA-163 / DSM 7039 / HB27).